Reading from the N-terminus, the 829-residue chain is RNA-directed RNA polymerase (829 aa).

A disordered region spans residues Met1–Arg39.

In terms of assembly, forms a ribonucleoprotein complex with the 20S RNA, where a single polymerase molecule binds to a single viral RNA genome. Since the viral RNA is not encapsidated, ribonucleoprotein complex formation appears to be the strategy to survive in the host as persistent virus.

It is found in the host cytoplasm. The enzyme catalyses RNA(n) + a ribonucleoside 5'-triphosphate = RNA(n+1) + diphosphate. RNA-directed RNA polymerase that replicates the viral (+) and (-) genome. In Saccharomyces cerevisiae (Baker's yeast), this protein is RNA-directed RNA polymerase.